Here is a 101-residue protein sequence, read N- to C-terminus: DNA-directed RNA polymerase subunit omega (101 aa).

Low complexity predominate over residues 1 to 13 (MSSTPAAASATPS). Residues 1 to 22 (MSSTPAAASATPSHGALPAYDT) form a disordered region.

This sequence belongs to the RNA polymerase subunit omega family. As to quaternary structure, the RNAP catalytic core consists of 2 alpha, 1 beta, 1 beta' and 1 omega subunit. When a sigma factor is associated with the core the holoenzyme is formed, which can initiate transcription.

It catalyses the reaction RNA(n) + a ribonucleoside 5'-triphosphate = RNA(n+1) + diphosphate. Functionally, promotes RNA polymerase assembly. Latches the N- and C-terminal regions of the beta' subunit thereby facilitating its interaction with the beta and alpha subunits. The polypeptide is DNA-directed RNA polymerase subunit omega (Rhodococcus jostii (strain RHA1)).